The following is a 289-amino-acid chain: Formamidopyrimidine-DNA glycosylase (289 aa).

Proline 2 (schiff-base intermediate with DNA) is an active-site residue. Glutamate 3 functions as the Proton donor in the catalytic mechanism. Residue lysine 61 is the Proton donor; for beta-elimination activity of the active site. Histidine 96, arginine 115, and lysine 161 together coordinate DNA. The FPG-type zinc-finger motif lies at serine 247–arginine 281. Arginine 271 (proton donor; for delta-elimination activity) is an active-site residue.

It belongs to the FPG family. Monomer. Zn(2+) serves as cofactor.

It carries out the reaction Hydrolysis of DNA containing ring-opened 7-methylguanine residues, releasing 2,6-diamino-4-hydroxy-5-(N-methyl)formamidopyrimidine.. The catalysed reaction is 2'-deoxyribonucleotide-(2'-deoxyribose 5'-phosphate)-2'-deoxyribonucleotide-DNA = a 3'-end 2'-deoxyribonucleotide-(2,3-dehydro-2,3-deoxyribose 5'-phosphate)-DNA + a 5'-end 5'-phospho-2'-deoxyribonucleoside-DNA + H(+). Its function is as follows. Involved in base excision repair of DNA damaged by oxidation or by mutagenic agents. Acts as a DNA glycosylase that recognizes and removes damaged bases. Has a preference for oxidized purines, such as 7,8-dihydro-8-oxoguanine (8-oxoG). Has AP (apurinic/apyrimidinic) lyase activity and introduces nicks in the DNA strand. Cleaves the DNA backbone by beta-delta elimination to generate a single-strand break at the site of the removed base with both 3'- and 5'-phosphates. The protein is Formamidopyrimidine-DNA glycosylase of Rhodococcus opacus (strain B4).